The following is a 92-amino-acid chain: Acylphosphatase (92 aa).

The region spanning 5–92 (RAHVVVSGKV…GEFSGFKIAF (88 aa)) is the Acylphosphatase-like domain. Catalysis depends on residues R20 and N38.

The protein belongs to the acylphosphatase family.

The enzyme catalyses an acyl phosphate + H2O = a carboxylate + phosphate + H(+). The protein is Acylphosphatase (acyP) of Pelotomaculum thermopropionicum (strain DSM 13744 / JCM 10971 / SI).